Consider the following 309-residue polypeptide: Ribonuclease Z (309 aa).

The Zn(2+) site is built by histidine 63, histidine 65, aspartate 67, histidine 68, histidine 141, aspartate 212, and histidine 270. The active-site Proton acceptor is aspartate 67.

This sequence belongs to the RNase Z family. Homodimer. It depends on Zn(2+) as a cofactor.

The enzyme catalyses Endonucleolytic cleavage of RNA, removing extra 3' nucleotides from tRNA precursor, generating 3' termini of tRNAs. A 3'-hydroxy group is left at the tRNA terminus and a 5'-phosphoryl group is left at the trailer molecule.. Functionally, zinc phosphodiesterase, which displays some tRNA 3'-processing endonuclease activity. Probably involved in tRNA maturation, by removing a 3'-trailer from precursor tRNA. The protein is Ribonuclease Z of Lactobacillus delbrueckii subsp. bulgaricus (strain ATCC 11842 / DSM 20081 / BCRC 10696 / JCM 1002 / NBRC 13953 / NCIMB 11778 / NCTC 12712 / WDCM 00102 / Lb 14).